We begin with the raw amino-acid sequence, 27 residues long: Delta-actitoxin-Avd2a (27 aa).

Cystine bridges form between cysteine 3–cysteine 17, cysteine 4–cysteine 11, and cysteine 6–cysteine 22.

This sequence belongs to the sea anemone short toxin (type III) family.

It localises to the secreted. Its subcellular location is the nematocyst. Specific arthropod (crab and insect) toxin that inhibits inactivation of voltage-gated sodium channels. It competes well with the site-3 toxin LqhalphaIT (from the scorpion L.quinquestriatus (AC P17728)) on binding to cockroach neuronal membranes (Ki=21.4 nM), and inhibits the inactivation of D.melanogaster channel (DmNav1), but not that of mammalian Navs expressed in Xenopus oocytes. Its activity is synergically enhanced by ligands of receptor site-4 (Bj-xtrIT (AC P56637)). Its ability to inhibit the channel mutant DmNav1[D1701R] only decreases 5-fold, whereas the inhibition activity is completely lost by LqhalphaIT and Av2 when tested on DmNav1[D1701R]. In Anemonia sulcata (Mediterranean snakelocks sea anemone), this protein is Delta-actitoxin-Avd2a.